The sequence spans 72 residues: ATP synthase subunit c (72 aa).

The next 2 helical transmembrane spans lie at 1 to 21 and 49 to 69; these read MSLGVIAAAIAIGLSALGAGI and FIGVALVEALPIIGVVIAFIV.

It belongs to the ATPase C chain family. F-type ATPases have 2 components, F(1) - the catalytic core - and F(0) - the membrane proton channel. F(1) has five subunits: alpha(3), beta(3), gamma(1), delta(1), epsilon(1). F(0) has three main subunits: a(1), b(2) and c(10-14). The alpha and beta chains form an alternating ring which encloses part of the gamma chain. F(1) is attached to F(0) by a central stalk formed by the gamma and epsilon chains, while a peripheral stalk is formed by the delta and b chains.

The protein localises to the cell membrane. In terms of biological role, f(1)F(0) ATP synthase produces ATP from ADP in the presence of a proton or sodium gradient. F-type ATPases consist of two structural domains, F(1) containing the extramembraneous catalytic core and F(0) containing the membrane proton channel, linked together by a central stalk and a peripheral stalk. During catalysis, ATP synthesis in the catalytic domain of F(1) is coupled via a rotary mechanism of the central stalk subunits to proton translocation. Functionally, key component of the F(0) channel; it plays a direct role in translocation across the membrane. A homomeric c-ring of between 10-14 subunits forms the central stalk rotor element with the F(1) delta and epsilon subunits. The polypeptide is ATP synthase subunit c (Bacillus anthracis (strain A0248)).